The primary structure comprises 562 residues: Tryptophan 2-monooxygenase (562 aa).

FMN is bound by residues serine 54, glutamate 74, arginine 76, arginine 82, and arginine 104. Arginine 104 lines the substrate pocket.

It belongs to the tryptophan 2-monooxygenase family. FMN serves as cofactor.

The catalysed reaction is L-tryptophan + O2 = indole-3-acetamide + CO2 + H2O. It functions in the pathway plant hormone metabolism; auxin biosynthesis. This chain is Tryptophan 2-monooxygenase (iaaM), found in Pantoea agglomerans pv. gypsophilae (Erwinia herbicola).